The chain runs to 501 residues: ATP synthase subunit alpha (501 aa).

169–176 (GDRQTGKT) contributes to the ATP binding site.

The protein belongs to the ATPase alpha/beta chains family. In terms of assembly, F-type ATPases have 2 components, CF(1) - the catalytic core - and CF(0) - the membrane proton channel. CF(1) has five subunits: alpha(3), beta(3), gamma(1), delta(1), epsilon(1). CF(0) has three main subunits: a(1), b(2) and c(9-12). The alpha and beta chains form an alternating ring which encloses part of the gamma chain. CF(1) is attached to CF(0) by a central stalk formed by the gamma and epsilon chains, while a peripheral stalk is formed by the delta and b chains.

It localises to the cell membrane. The enzyme catalyses ATP + H2O + 4 H(+)(in) = ADP + phosphate + 5 H(+)(out). In terms of biological role, produces ATP from ADP in the presence of a proton gradient across the membrane. The alpha chain is a regulatory subunit. The polypeptide is ATP synthase subunit alpha (Streptococcus pyogenes serotype M2 (strain MGAS10270)).